The following is a 304-amino-acid chain: UDP-3-O-acyl-N-acetylglucosamine deacetylase (304 aa).

Zn(2+) is bound by residues His-78, His-237, and Asp-241. The Proton donor role is filled by His-264.

It belongs to the LpxC family. Zn(2+) serves as cofactor.

The enzyme catalyses a UDP-3-O-[(3R)-3-hydroxyacyl]-N-acetyl-alpha-D-glucosamine + H2O = a UDP-3-O-[(3R)-3-hydroxyacyl]-alpha-D-glucosamine + acetate. It participates in glycolipid biosynthesis; lipid IV(A) biosynthesis; lipid IV(A) from (3R)-3-hydroxytetradecanoyl-[acyl-carrier-protein] and UDP-N-acetyl-alpha-D-glucosamine: step 2/6. Functionally, catalyzes the hydrolysis of UDP-3-O-myristoyl-N-acetylglucosamine to form UDP-3-O-myristoylglucosamine and acetate, the committed step in lipid A biosynthesis. The protein is UDP-3-O-acyl-N-acetylglucosamine deacetylase of Marinobacter nauticus (strain ATCC 700491 / DSM 11845 / VT8) (Marinobacter aquaeolei).